Here is a 251-residue protein sequence, read N- to C-terminus: Octanoyltransferase (251 aa).

The BPL/LPL catalytic domain maps to 49–230 (DEIPDQLLIL…ALDDALAGRL (182 aa)). Substrate contacts are provided by residues 87–94 (RGGRITWH), 160–162 (AIG), and 173–175 (GVA). The Acyl-thioester intermediate role is filled by Cys-191.

It belongs to the LipB family.

Its subcellular location is the cytoplasm. The catalysed reaction is octanoyl-[ACP] + L-lysyl-[protein] = N(6)-octanoyl-L-lysyl-[protein] + holo-[ACP] + H(+). The protein operates within protein modification; protein lipoylation via endogenous pathway; protein N(6)-(lipoyl)lysine from octanoyl-[acyl-carrier-protein]: step 1/2. Its function is as follows. Catalyzes the transfer of endogenously produced octanoic acid from octanoyl-acyl-carrier-protein onto the lipoyl domains of lipoate-dependent enzymes. Lipoyl-ACP can also act as a substrate although octanoyl-ACP is likely to be the physiological substrate. This chain is Octanoyltransferase, found in Corynebacterium glutamicum (strain R).